The sequence spans 452 residues: Pup--protein ligase (452 aa).

Position 9 (E9) interacts with Mg(2+). R53 is an ATP binding site. A Mg(2+)-binding site is contributed by Y55. D57 acts as the Proton acceptor in catalysis. A Mg(2+)-binding site is contributed by E63. T66 and W419 together coordinate ATP.

This sequence belongs to the Pup ligase/Pup deamidase family. Pup-conjugating enzyme subfamily.

It catalyses the reaction ATP + [prokaryotic ubiquitin-like protein]-L-glutamate + [protein]-L-lysine = ADP + phosphate + N(6)-([prokaryotic ubiquitin-like protein]-gamma-L-glutamyl)-[protein]-L-lysine.. The protein operates within protein degradation; proteasomal Pup-dependent pathway. It functions in the pathway protein modification; protein pupylation. Its function is as follows. Catalyzes the covalent attachment of the prokaryotic ubiquitin-like protein modifier Pup to the proteasomal substrate proteins, thereby targeting them for proteasomal degradation. This tagging system is termed pupylation. The ligation reaction involves the side-chain carboxylate of the C-terminal glutamate of Pup and the side-chain amino group of a substrate lysine. The polypeptide is Pup--protein ligase (Acidothermus cellulolyticus (strain ATCC 43068 / DSM 8971 / 11B)).